We begin with the raw amino-acid sequence, 590 residues long: Tape measure protein (590 aa).

Disordered regions lie at residues 1 to 35 (MKKP…LSGL), 147 to 185 (ESVG…EEKQ), and 515 to 535 (LKKN…EAKQ). The span at 176-185 (PKQESPEEKQ) shows a compositional bias: basic and acidic residues.

The protein localises to the virion. In terms of biological role, serves as a base for tail tube protein polymerization and acts as a template for tail length determination. This Escherichia coli (Bacteriophage T4) protein is Tape measure protein (29).